The sequence spans 537 residues: Sodium/hydrogen exchanger 9B2 (537 aa).

The segment covering Met-1–Tyr-10 has biased composition (basic and acidic residues). Residues Met-1–Thr-33 are disordered. The Cytoplasmic portion of the chain corresponds to Met-1–Arg-86. The segment covering Pro-15–Gln-27 has biased composition (polar residues). Ser-49 is modified (phosphoserine). Residues Val-87–Ile-104 form a helical membrane-spanning segment. At Thr-105 to Gly-113 the chain is on the extracellular side. Residues Asn-114–Gly-133 form a helical membrane-spanning segment. Topologically, residues Leu-134–Pro-144 are cytoplasmic. A helical membrane pass occupies residues Ser-145–Val-161. Residues Ile-162–Lys-171 are Extracellular-facing. Residues Trp-172–Gly-189 traverse the membrane as a helical segment. At Leu-190–Leu-200 the chain is on the cytoplasmic side. The helical transmembrane segment at Lys-201–Leu-227 threads the bilayer. Residues Gly-228–Trp-233 lie on the Extracellular side of the membrane. The chain crosses the membrane as a helical span at residues Gly-234–Gly-242. Topologically, residues Ala-243–Leu-270 are cytoplasmic. The Na(+) site is built by Val-244, Gly-275, Asp-278, and Asp-279. The chain crosses the membrane as a helical span at residues Leu-271–Leu-290. Residues Gly-291–Val-300 lie on the Extracellular side of the membrane. Residues Phe-301–Ile-324 traverse the membrane as a helical segment. Over Gln-325–Arg-339 the chain is Cytoplasmic. A helical transmembrane segment spans residues Thr-340 to Phe-357. The Extracellular portion of the chain corresponds to Gly-358–Gly-361. A helical transmembrane segment spans residues Ser-362–Leu-373. The Cytoplasmic segment spans residues Ala-374 to Ala-390. The chain crosses the membrane as a helical span at residues Val-391–Ala-411. Residues Ser-412 to Thr-417 lie on the Extracellular side of the membrane. A helical transmembrane segment spans residues Val-418–Val-440. Over Cys-441 to Ala-461 the chain is Cytoplasmic. A helical membrane pass occupies residues Thr-462–Asp-473. At Thr-474–Tyr-486 the chain is on the extracellular side. A helical transmembrane segment spans residues Gly-487–Ile-509. Topologically, residues Gly-510–Val-537 are cytoplasmic.

This sequence belongs to the monovalent cation:proton antiporter 1 (CPA1) transporter (TC 2.A.36) family. In terms of assembly, homodimer; dimerization is essential for SLC9B2 activity. Lipids seem to play a role in the stabilization of the dimerization subdomain.

The protein localises to the cell membrane. The protein resides in the mitochondrion membrane. It localises to the endosome membrane. It is found in the recycling endosome membrane. Its subcellular location is the cytoplasmic vesicle. The protein localises to the secretory vesicle. The protein resides in the synaptic vesicle membrane. It localises to the basolateral cell membrane. It is found in the apical cell membrane. The enzyme catalyses Li(+)(out) + H(+)(in) = Li(+)(in) + H(+)(out). It carries out the reaction Li(+)(in) + Na(+)(out) = Li(+)(out) + Na(+)(in). It catalyses the reaction Na(+)(in) + H(+)(out) = Na(+)(out) + H(+)(in). Its activity is regulated as follows. Allosterically inhibited by the N-terminal domain. Inhibited by phloretin. Functionally, electroneutral Na(+) Li(+)/H(+) antiporter that extrudes Na(+) or Li(+) in exchange for external protons across the membrane. Uses the proton gradient/membrane potential to extrude sodium. Contributes to the regulation of intracellular pH and sodium homeostasis. Also able to mediate Na(+)/Li(+) antiporter activity in kidney. May play a physiological role in renal tubular function and blood pressure homeostasis. Plays an important role for insulin secretion and clathrin-mediated endocytosis in beta-cells. Involved in sperm motility and fertility. It is controversial whether SLC9B2 plays a role in osteoclast differentiation or not. In Pongo abelii (Sumatran orangutan), this protein is Sodium/hydrogen exchanger 9B2 (SLC9B2).